The chain runs to 108 residues: uncharacterized protein (108 aa).

A compositionally biased stretch (low complexity) spans 39–68 (GLRSRSGTGSGNSRNGLKESGGSRSGPGKP). The interval 39 to 95 (GLRSRSGTGSGNSRNGLKESGGSRSGPGKPRGNRKSSRRIRPRPTSEKPRGYWRSSW) is disordered. Residues 69 to 80 (RGNRKSSRRIRP) are compositionally biased toward basic residues.

This is an uncharacterized protein from Acidithiobacillus ferridurans.